Reading from the N-terminus, the 123-residue chain is Photosystem II extrinsic protein U (123 aa).

The signal sequence occupies residues 1–28; that stretch reads MKTLARILVVFTLIVGLIGFFNPLPAQA.

It belongs to the PsbU family. As to quaternary structure, PSII is composed of 1 copy each of membrane proteins PsbA, PsbB, PsbC, PsbD, PsbE, PsbF, PsbH, PsbI, PsbJ, PsbK, PsbL, PsbM, PsbT, PsbX, PsbY, PsbZ, Psb30/Ycf12, peripheral proteins PsbO, CyanoQ (PsbQ), PsbU, PsbV and a large number of cofactors. It forms dimeric complexes.

The protein resides in the cellular thylakoid membrane. Its function is as follows. One of the extrinsic, lumenal subunits of photosystem II (PSII). PSII is a light-driven water plastoquinone oxidoreductase, using light energy to abstract electrons from H(2)O, generating a proton gradient subsequently used for ATP formation. The extrinsic proteins stabilize the structure of photosystem II oxygen-evolving complex (OEC), the ion environment of oxygen evolution and protect the OEC against heat-induced inactivation. The sequence is that of Photosystem II extrinsic protein U from Gloeothece citriformis (strain PCC 7424) (Cyanothece sp. (strain PCC 7424)).